A 462-amino-acid chain; its full sequence is Gamma-aminobutyric acid receptor subunit alpha-5 (462 aa).

The signal sequence occupies residues 1-31; the sequence is MDNGMFSSFIMIKNLLLFCISMNLASHFGFS. Residues 32 to 260 lie on the Extracellular side of the membrane; it reads QMPTSSVKAE…FHLKRKIGYF (229 aa). Asn-45 is a glycosylation site (N-linked (GlcNAc...) asparagine). Residue Arg-101 participates in 4-aminobutanoate binding. The N-linked (GlcNAc...) asparagine glycan is linked to Asn-145. Thr-164 contributes to the 4-aminobutanoate binding site. A disulfide bridge connects residues Cys-173 and Cys-187. 2 N-linked (GlcNAc...) asparagine glycosylation sites follow: Asn-207 and Asn-236. The next 3 helical transmembrane spans lie at 261–281, 287–308, and 319–340; these read VIQT…SFWL, PART…ISAR, and AMDW…EFAT. Residues 341–427 are Cytoplasmic-facing; that stretch reads VNYFTKRGWA…TYNSISKIDK (87 aa). A Glycyl lysine isopeptide (Lys-Gly) (interchain with G-Cter in ubiquitin) cross-link involves residue Lys-355. Residues 375 to 412 are disordered; that stretch reads TNAYTTGKMTHPPNIPKEQTPAGTTNASSASVKPEDKA. Residues 395–405 are compositionally biased toward polar residues; sequence PAGTTNASSAS. A helical transmembrane segment spans residues 428 to 448; sequence MSRIIFPLLFGTFNLVYWATY.

This sequence belongs to the ligand-gated ion channel (TC 1.A.9) family. Gamma-aminobutyric acid receptor (TC 1.A.9.5) subfamily. GABRA5 sub-subfamily. In terms of assembly, heteropentamer, formed by a combination of alpha (GABRA1-6), beta (GABRB1-3), gamma (GABRG1-3), delta (GABRD), epsilon (GABRE), rho (GABRR1-3), pi (GABRP) and theta (GABRQ) chains, each subunit exhibiting distinct physiological and pharmacological properties.

The protein localises to the postsynaptic cell membrane. It is found in the cell membrane. It catalyses the reaction chloride(in) = chloride(out). Functionally, alpha subunit of the heteropentameric ligand-gated chloride channel gated by gamma-aminobutyric acid (GABA), a major inhibitory neurotransmitter in the brain. GABA-gated chloride channels, also named GABA(A) receptors (GABAAR), consist of five subunits arranged around a central pore and contain GABA active binding site(s) located at the alpha and beta subunit interface(s). When activated by GABA, GABAARs selectively allow the flow of chloride anions across the cell membrane down their electrochemical gradient. GABAARs containing alpha-5/GABRA5 subunits are mainly extrasynaptic and contribute to the tonic GABAergic inhibition in the hippocampus. Extrasynaptic alpha-5-containing GABAARs in CA1 pyramidal neurons play a role in learning and memory processes. The sequence is that of Gamma-aminobutyric acid receptor subunit alpha-5 (GABRA5) from Bos taurus (Bovine).